The following is a 463-amino-acid chain: Argininosuccinate lyase (463 aa).

It belongs to the lyase 1 family. Argininosuccinate lyase subfamily.

It is found in the cytoplasm. The catalysed reaction is 2-(N(omega)-L-arginino)succinate = fumarate + L-arginine. It participates in amino-acid biosynthesis; L-arginine biosynthesis; L-arginine from L-ornithine and carbamoyl phosphate: step 3/3. This is Argininosuccinate lyase from Thermosynechococcus vestitus (strain NIES-2133 / IAM M-273 / BP-1).